Consider the following 435-residue polypeptide: Hyaluronidase-1 (435 aa).

The signal sequence occupies residues 1-21 (MAAHLLPICALFLTLLDMAQG). 2 cysteine pairs are disulfide-bonded: cysteine 43–cysteine 333 and cysteine 207–cysteine 221. N-linked (GlcNAc...) asparagine glycosylation is present at asparagine 99. The active-site Proton donor is glutamate 131. 2 N-linked (GlcNAc...) asparagine glycosylation sites follow: asparagine 216 and asparagine 350. In terms of domain architecture, EGF-like spans 354-430 (GALLCSQALC…YPGWQAPWCE (77 aa)). Disulfide bonds link cysteine 358/cysteine 369, cysteine 363/cysteine 418, and cysteine 420/cysteine 429.

The protein belongs to the glycosyl hydrolase 56 family. In terms of tissue distribution, highly expressed in the liver, kidney and heart. Weakly expressed in lung, placenta and skeletal muscle. No expression detected in adult brain. Isoform 1 is expressed only in bladder and prostate cancer cells, G2/G3 bladder tumor tissues and lymph node specimens showing tumor invasive tumors cells. Isoform 3, isoform 4, isoform 5 and isoform 6 are expressed in normal bladder and bladder tumor tissues.

It localises to the secreted. It is found in the lysosome. It carries out the reaction Random hydrolysis of (1-&gt;4)-linkages between N-acetyl-beta-D-glucosamine and D-glucuronate residues in hyaluronate.. In terms of biological role, may have a role in promoting tumor progression. May block the TGFB1-enhanced cell growth. The sequence is that of Hyaluronidase-1 (HYAL1) from Homo sapiens (Human).